Reading from the N-terminus, the 311-residue chain is Malate dehydrogenase (311 aa).

NAD(+)-binding positions include 7 to 13 (GAAGGIG) and Asp34. The substrate site is built by Arg81 and Arg87. Residues Asn94 and 117 to 119 (ITN) each bind NAD(+). The substrate site is built by Asn119 and Arg153. His177 acts as the Proton acceptor in catalysis. Met227 provides a ligand contact to NAD(+).

This sequence belongs to the LDH/MDH superfamily. MDH type 1 family. Homodimer.

The enzyme catalyses (S)-malate + NAD(+) = oxaloacetate + NADH + H(+). Catalyzes the reversible oxidation of malate to oxaloacetate. The sequence is that of Malate dehydrogenase from Vibrio atlanticus (strain LGP32) (Vibrio splendidus (strain Mel32)).